Consider the following 267-residue polypeptide: MKVLIIFAHPEPQSLNGALHRVAVEELEEQGHHVQVSDLYKMKWKSEVDREDFPNFPKDQRLDLWTASAEAYAENSLTQDVLDEQAKLRWADFVIFHFPLWWFTMPAILKGWVDRVYTYGFGHGLGEHSDKRWGDRYGEGTLTGKRAMLIVTLGGWKEHYSARGISGPIEDVLFPINHGILFYPGFEVLPPFVAFRVHKTSFDEMASTLRKRMREIEFTKPIPYRNQNDGEYSIPTLTLHESHGGDLASGFGLHTRTEVETTDVKEA.

FAD is bound by residues H9, L15–N16, and L100–F103. A substrate-binding site is contributed by G122–G124. FAD is bound by residues T152 to G155 and Y160.

Belongs to the NAD(P)H dehydrogenase (quinone) family. In terms of assembly, homodimer. FAD is required as a cofactor.

The protein operates within secondary metabolite biosynthesis. In terms of biological role, ribosyldihydronicotinamide dehydrogenase-like protein; part of the tra gene cluster that produces terrestric acid. The clavatol biosynthesis cluster cla and the terrestric acid cluster tra are both involved in the production of peniphenones and penilactones. The non-reducing PKS claF is responsible for the formation of clavatol from successive condensations of 3 malonyl-CoA units, presumably with a simple acetyl-CoA starter unit, and 2 methylation steps. The esterase claE probably collaborates with claF by catalyzing the hydrolysis of ACP-bound acyl intermediates to free the ACP from stalled intermediates. The clavatol oxidase claD then converts clavatol to hydroxyclavatol. Spontaneous dehydration of hydroxyclavatol leads to the accumulation of the highly active ortho-quinone methide. On the other hand, the PKS-NRPS hybrid traA is involved in the formation of crustosic acid, with the help of traB and traD. The polyketide synthase module (PKS) of traA is responsible for the synthesis of the polyketide backbone via the condensation of an acetyl-CoA starter unit with 3 malonyl-CoA units. The downstream nonribosomal peptide synthetase (NRPS) module then amidates the carboxyl end of the polyketide with L-malic acid. Because traA lacks a designated enoylreductase (ER) domain, the required activity is provided the enoyl reductase traG. Crustosic acid undergoes decarboxylation and isomerization to the terrestric acid, catalyzed by the 2-oxoglutarate-dependent dioxygenase traH. Both acids are further converted to the 2 gamma-butyrolactones (R)-5-methyltetronic acid and (S)-5-carboxylmethyltetronic acid, with involvement of the cytochrome P450 monooxygenase claJ. Spontaneous addition of the methide to these gamma-butyrolactones leads to peniphenone D and penilactone D, which undergo again stereospecific attacking by methide to give penilactones A and B. The protein is Ribosyldihydronicotinamide dehydrogenase-like protein traD of Penicillium crustosum (Blue mold fungus).